We begin with the raw amino-acid sequence, 133 residues long: Large ribosomal subunit protein bL19 (133 aa).

It belongs to the bacterial ribosomal protein bL19 family.

Its function is as follows. This protein is located at the 30S-50S ribosomal subunit interface and may play a role in the structure and function of the aminoacyl-tRNA binding site. The sequence is that of Large ribosomal subunit protein bL19 from Sulfurihydrogenibium sp. (strain YO3AOP1).